Consider the following 1192-residue polypeptide: Probable ATP-binding protein BrxC (1192 aa).

The protein belongs to the BrxC family.

Its function is as follows. BREX systems (bacteriophage exclusion) provide immunity against bacteriophage. A core protein of a type 1 BREX system. This system allows phage adsorption but prevents phage DNA replication, without degradation of the phage DNA. Methylation of bacterial DNA by PglX probably guides self/non-self discrimination. When the brxA-brxB-brxC-pglX and pglZ-brxL operons are transformed into a susceptible B.subtilis strain (BEST7003) they confer resistance to bacteriophages SPbeta, SP16, Zeta, phi3T and SP02 and partial protection to phages SP01 and SP82G (these include lytic and temperate phage). They do not protect against phages phi105, rho10 or rho14. Additionally confers a very slight reduction in efficiency of plasmid transformation. The protein is Probable ATP-binding protein BrxC of Bacillus cereus (strain H3081.97).